The following is a 247-amino-acid chain: Hydroxyacylglutathione hydrolase 1 (247 aa).

Residues H54, H56, D58, H59, H111, D128, and H165 each coordinate Zn(2+).

Belongs to the metallo-beta-lactamase superfamily. Glyoxalase II family. As to quaternary structure, monomer. It depends on Zn(2+) as a cofactor.

The enzyme catalyses an S-(2-hydroxyacyl)glutathione + H2O = a 2-hydroxy carboxylate + glutathione + H(+). Its pathway is secondary metabolite metabolism; methylglyoxal degradation; (R)-lactate from methylglyoxal: step 2/2. Functionally, thiolesterase that catalyzes the hydrolysis of S-D-lactoyl-glutathione to form glutathione and D-lactic acid. The chain is Hydroxyacylglutathione hydrolase 1 from Vibrio vulnificus (strain YJ016).